A 1765-amino-acid chain; its full sequence is MSARAAAAKSTAMEETAIWEQHTVTLHRAPGFGFGIAISGGRDNPHFQSGETSIVISDVLKGGPAEGQLQENDRVAMVNGVSMDNVEHAFAVQQLRKSGKNAKITIRRKKKVQIPVSHPDPDPVSDNEDDSYDEDVHDPRSGRGALANRRGEKSWARDRSASRDRSLSPRSDRRSVASSQPAKPTKVTLVKSRKNEEYGLRLASHIFVKEISQDSLAARDGNIQEGDVVLKINGTVTENMSLTDAKTLIERSKGKLKMVVQRDERATLLNVPDLSDSIHSANASERDDISEIQSLASDHSVRSHDRPPRRSQSRSPDQRSEPSDHSTQSPQQPSNGSLRSREEERMSKPGAVSTPVKHVDDHTPKAVEEVTVEKHEKQTPTLPEPKPVYAQVGQPDVDLPVSPSDGVLPNSTHEDGILRPSMKLVKFRKGDSVGLRLAGGNDVGIFVAGVLEDSPAAKEGLEEGDQILRVNNVDFTNIIREEAVLFLLDLPKGEEVTILAQKKKDVYRRIVESDVGDSFYIRTHFEYEKESPYGLSFNKGEVFRVVDTLYNGKLGSWLAIRIGKNHKEVERGIVPNKNRAEQLASVQYTLPKTAGGDRADFWRFRGLRSSKRNLRKSREDLSAQPVQTKFPAYERVVLREAGFLRPVTIFGPIADVAREKLAREEPDIYQIAKSEPRDAGTDHRSSGIIRLHTIKQIIDQDKHALLDVTPNAVDRLNYAQWYPIVVFLNPDSKQGVKTMRMRLCPESRKSARKLYERSHKLRKNNHHLFTTTINLNSMNDGWYGALKEAIQQQQNQLVWVSEGKADGATSDDLDLHDDRLSYLSAPGSEYSMYSTDSRHTSDYEDTDTEGGAYTDQELDETLNDEVGTPPESAITRSSEPVREDSSGMHHENQTYPPYSPQAQPQAIHRIDSPGLKTASQQKAEASSPVPYLSPETNPASSASAVKHNVNLTNVNLEEPTPAPPTSHVSQADCLGAPSPEAPHTMLRDEGVSLPSHVDPAKVYRKEPYPEEMMRQNHILKQPALGHPGQRLDKEPNPAYDPQLPYVEKQASRDLEQPPYRYESSSYTDQFSRNYDHRLRFEDRVPTYEDQWSYYDDKQPYPTRPFDTQHPRDLDSRQHPEEASERGYFQRFEEPAPLPYDSRPRYEQLPRTSTLRHEEQPTSGYEVHNRYRPEAQPYAPAGPKSSEPKQYFDQYPRSYEQVPPPGFTSKTGHYEPLHGAAVVPPLIPSSQHKPEVLPSATKPQPPPPALTEEEEDPAMKPQSVLTRVKMFENKRSASLENKKDVNDTASFKPPEVASKPPSASLVGPKPVSQTQFSEHDKTLYRLPEPQKPQAKPPEDIVRSNHYDPEEDEEYYRKQLSYFDRRSFESKPPAHIPAGHHSEPAKPVHSQSQPNFSSYSSKGKPETDAMDRSFSEKRYDPTQAMPPPPPLPSQYSQPVPPLSNSSLHIHSKAAQSEGNSVSLDFQNSYISKPDPPPSQSKPATFRPPTREDPPQTFYPQKSFPDKASVNGAEQTQKTITPAYNRFTPKPYTSSARPFERKFESPKFNHNLLPSETVHKPELSSKPPPSPKTLMKAHSSTQPPEFDSGVETFSVHTDKPKYQINNISTMPKAVPVSPSAVEEDEDEDGHTVVATARGIFNSNGGVLSSIETGVSIIIPQGAIPEGIEQEIYFKVCRDNSILPPLDKEKGETLLSPLVMCGPHGLKFLKPVELRLPHCASMTPDGWSFALKSSDSSSGDPKTWQNKCLPGDPNYLVGANCVSVLIDHF.

The PDZ 1 domain maps to 23 to 110 (TVTLHRAPGF…NAKITIRRKK (88 aa)). The segment covering 102–112 (AKITIRRKKKV) has biased composition (basic residues). The disordered stretch occupies residues 102-189 (AKITIRRKKK…QPAKPTKVTL (88 aa)). A compositionally biased stretch (acidic residues) spans 123–136 (PVSDNEDDSYDEDV). The residue at position 125 (serine 125) is a Phosphoserine. Tyrosine 132 is modified (phosphotyrosine). Residues 149-175 (RRGEKSWARDRSASRDRSLSPRSDRRS) are compositionally biased toward basic and acidic residues. Residues serine 175, serine 178, and serine 179 each carry the phosphoserine modification. Threonine 185 is subject to Phosphothreonine. In terms of domain architecture, PDZ 2 spans 186–264 (KVTLVKSRKN…KLKMVVQRDE (79 aa)). 2 positions are modified to phosphoserine: serine 212 and serine 241. Threonine 267 carries the phosphothreonine modification. A phosphoserine mark is found at serine 275, serine 277, serine 280, serine 284, serine 290, serine 294, serine 297, serine 300, serine 323, serine 329, serine 334, serine 337, and serine 353. Residues 296-363 (ASDHSVRSHD…TPVKHVDDHT (68 aa)) form a disordered region. Basic and acidic residues predominate over residues 299 to 308 (HSVRSHDRPP). A compositionally biased stretch (polar residues) spans 325–338 (HSTQSPQQPSNGSL). Threonine 354 is modified (phosphothreonine). In terms of domain architecture, PDZ 3 spans 421–502 (SMKLVKFRKG…GEEVTILAQK (82 aa)). Residues 516-584 (GDSFYIRTHF…PNKNRAEQLA (69 aa)) form the SH3 domain. A phosphoserine mark is found at serine 617 and serine 622. An occludin (OCLN)-binding region region spans residues 633-876 (YERVVLREAG…GTPPESAITR (244 aa)). One can recognise a Guanylate kinase-like domain in the interval 690–791 (RLHTIKQIID…WYGALKEAIQ (102 aa)). The residue at position 809 (threonine 809) is a Phosphothreonine. Serine 810 and serine 821 each carry phosphoserine. Position 822 is a phosphotyrosine (tyrosine 822). Residues serine 824, serine 828, and serine 837 each carry the phosphoserine modification. 2 disordered regions span residues 825-941 (APGS…PASS) and 1023-1042 (ALGH…YDPQ). A phosphothreonine mark is found at threonine 846, threonine 848, threonine 854, threonine 861, and threonine 868. The span at 879-892 (EPVREDSSGMHHEN) shows a compositional bias: basic and acidic residues. The span at 893 to 906 (QTYPPYSPQAQPQA) shows a compositional bias: low complexity. A Phosphoserine modification is found at serine 912. Serine 1071 is modified (phosphoserine). The segment at 1092 to 1585 (SYYDDKQPYP…SSTQPPEFDS (494 aa)) is disordered. Positions 1106-1124 (DTQHPRDLDSRQHPEEASE) are enriched in basic and acidic residues. Tyrosine 1139 and tyrosine 1164 each carry phosphotyrosine. The segment at 1150–1370 (RTSTLRHEEQ…FDRRSFESKP (221 aa)) is actin-binding region (ABR). Basic and acidic residues-rich tracts occupy residues 1268–1285 (KMFE…KDVN) and 1335–1346 (PPEDIVRSNHYD). Residue tyrosine 1353 is modified to Phosphotyrosine. Position 1365 is a phosphoserine (serine 1365). Residues 1388 to 1399 (SQSQPNFSSYSS) show a composition bias toward low complexity. The span at 1401–1418 (GKPETDAMDRSFSEKRYD) shows a compositional bias: basic and acidic residues. Serine 1411 bears the Phosphoserine mark. 2 stretches are compositionally biased toward polar residues: residues 1442-1468 (NSSL…NSYI) and 1509-1519 (GAEQTQKTITP). The segment covering 1535-1544 (PFERKFESPK) has biased composition (basic and acidic residues). Residues serine 1542 and serine 1614 each carry the phosphoserine modification. The region spanning 1631–1765 (ATARGIFNSN…NCVSVLIDHF (135 aa)) is the ZU5 domain.

Belongs to the MAGUK family. In terms of assembly, homodimer. Forms heterodimers TJP3. Forms a heterodimer (via PDZ2 domain) with TJP2/ZO2 (via PDZ2 domain). Interacts with OCLN. Interacts with CALM, claudins, CGN/cingulin, CXADR, GJA12, GJD3 and UBN1. Interacts (via ZU5 domain) with CDC42BPB and MYZAP. Interacts (via PDZ domain) with GJA1. Interacts (via PDZ domains) with ANKRD2. Interacts with BVES (via the C-terminus cytoplasmic tail). Interacts with HSPA4. Interacts with KIRREL1. Interacts with DLL1. Interacts with USP53 (via the C-terminal region). Interacts with DNMBP (via C-terminal domain); required for the apical cell-cell junction localization of DNMBP. Interacts with SPEF1. Interacts (via N-terminus) with CTNNA1. Interacts with CLDN18. Interacts with CLDN16 (via TRV motif); this is a prerequisite for anchoring of CLDN16 at the tight junction. Interacts with PKP1; the interaction facilitates TJP1/ZO-1 localization to the plasma membrane. Post-translationally, phosphorylated at tyrosine redidues in response to epidermal growth factor (EGF). This response is dependent on an intact actin microfilament system. Dephosphorylated by Ptprj.

Its subcellular location is the cell membrane. It is found in the cell junction. The protein localises to the tight junction. The protein resides in the gap junction. Functionally, tjpP1, Tjp2, and Tjp3 are closely related scaffolding proteins that link tight junction (TJ) transmembrane proteins such as claudins, junctional adhesion molecules, and occludin to the actin cytoskeleton. The tight junction acts to limit movement of substances through the paracellular space and as a boundary between the compositionally distinct apical and basolateral plasma membrane domains of epithelial and endothelial cells. Necessary for lumenogenesis, and particularly efficient epithelial polarization and barrier formation. Plays a role in the regulation of cell migration by targeting Cdc42bpb to the leading edge of migrating cells. Plays an important role in podosome formation and associated function, thus regulating cell adhesion and matrix remodeling. With Tjp2 and Tjp3, participates in the junctional retention and stability of the transcription factor Dbpa, but is not involved in its shuttling to the nucleus. May play a role in mediating cell morphology changes during ameloblast differentiation via its role in tight junctions. The polypeptide is Tight junction protein ZO-1 (Rattus norvegicus (Rat)).